Here is a 153-residue protein sequence, read N- to C-terminus: 6,7-dimethyl-8-ribityllumazine synthase (153 aa).

5-amino-6-(D-ribitylamino)uracil is bound by residues Phe22, 56-58, and 80-82; these read AFE and TVI. A (2S)-2-hydroxy-3-oxobutyl phosphate-binding site is contributed by 85–86; that stretch reads ST. Catalysis depends on His88, which acts as the Proton donor. Phe113 serves as a coordination point for 5-amino-6-(D-ribitylamino)uracil. Residue Arg127 coordinates (2S)-2-hydroxy-3-oxobutyl phosphate.

This sequence belongs to the DMRL synthase family. Forms an icosahedral capsid composed of 60 subunits, arranged as a dodecamer of pentamers.

It catalyses the reaction (2S)-2-hydroxy-3-oxobutyl phosphate + 5-amino-6-(D-ribitylamino)uracil = 6,7-dimethyl-8-(1-D-ribityl)lumazine + phosphate + 2 H2O + H(+). It functions in the pathway cofactor biosynthesis; riboflavin biosynthesis; riboflavin from 2-hydroxy-3-oxobutyl phosphate and 5-amino-6-(D-ribitylamino)uracil: step 1/2. Its function is as follows. Catalyzes the formation of 6,7-dimethyl-8-ribityllumazine by condensation of 5-amino-6-(D-ribitylamino)uracil with 3,4-dihydroxy-2-butanone 4-phosphate. This is the penultimate step in the biosynthesis of riboflavin. This Haemophilus ducreyi (strain 35000HP / ATCC 700724) protein is 6,7-dimethyl-8-ribityllumazine synthase.